The chain runs to 117 residues: Large ribosomal subunit protein uL22 (117 aa).

It belongs to the universal ribosomal protein uL22 family. As to quaternary structure, part of the 50S ribosomal subunit.

Its function is as follows. This protein binds specifically to 23S rRNA; its binding is stimulated by other ribosomal proteins, e.g. L4, L17, and L20. It is important during the early stages of 50S assembly. It makes multiple contacts with different domains of the 23S rRNA in the assembled 50S subunit and ribosome. Functionally, the globular domain of the protein is located near the polypeptide exit tunnel on the outside of the subunit, while an extended beta-hairpin is found that lines the wall of the exit tunnel in the center of the 70S ribosome. The chain is Large ribosomal subunit protein uL22 from Lactobacillus helveticus (strain DPC 4571).